The following is a 727-amino-acid chain: MSQQDAVAALSERLLVAAYKGQTENVVQLINKGARVAVTKHGRTPLHLAANKGHLPVVQILLKAGCDLDVQDDGDQTALHRATVVGNTEIIAALIHEGCALDRQDKDGNTALHEASWHGFSQSAKLLIKAGANVLAKNKAGNTALHLACQNSHSQSTRVLLLAGSRADLKNNAGDTCLHVAARYNHLSIIRLLLTAFCSVHEKNQAGDTALHVAAALNHKKVAKILLEAGADTTIVNNAGQTPLETARYHNNPEVALLLTKAPQVLRFSRGRSLRKKRERLKEERRAQSVPRDEVAQSKGSVSAGDTPSSEQAVARKEEAREEFLSASPEPRAKDDRRRKSRPKVSAFSDPTPPADQQPGHQKNLHAHNHPKKRNRHRCSSPPPPHEFRAYQLYTLYRGKDGKVMQAPINGCRCEPLINKLENQLEATVEEIKAELGSVQDKMNTKLGQMENKTQHQMRVLDKLMVERLSAERTECLNRLQQHSDTEKHEGEKRQISLVDELKTWCMLKIQNLEQKLSGDSRACRAKSTPSTCESSTGVDQLVVTAGPAAASDSSPPVVRPKEKALNSTATQRLQQELSSSDCTGSRLRNVKVQTALLPMNEAARSDQQAGPCVNRGTQTKKSGKSGPTRHRAQQPAASSTCGQPPPATGSEQTGPHIRDTSQALELTQYFFEAVSTQMEKWYERKIEEARSQANQKAQQDKATLKEHIKSLEEELAKLRTRVQKEN.

8 ANK repeats span residues 9-38 (ALSE…RVAV), 41-70 (HGRT…DLDV), 74-103 (GDQT…ALDR), 107-136 (DGNT…NVLA), 140-169 (AGNT…RADL), 173-202 (AGDT…SVHE), 206-235 (AGDT…DTTI), and 239-268 (AGQT…VLRF). A disordered region spans residues 277–386 (KRERLKEERR…HRCSSPPPPH (110 aa)). Basic and acidic residues predominate over residues 280 to 296 (RLKEERRAQSVPRDEVA). The span at 298–312 (SKGSVSAGDTPSSEQ) shows a compositional bias: polar residues. A compositionally biased stretch (basic and acidic residues) spans 314-324 (VARKEEAREEF). The segment covering 363–379 (KNLHAHNHPKKRNRHRC) has biased composition (basic residues). A coiled-coil region spans residues 417-446 (LINKLENQLEATVEEIKAELGSVQDKMNTK). Low complexity predominate over residues 548-557 (PAAASDSSPP). Disordered stretches follow at residues 548–586 (PAAA…CTGS) and 601–657 (NEAA…TGPH). Residues 566–584 (LNSTATQRLQQELSSSDCT) show a composition bias toward polar residues. A compositionally biased stretch (basic residues) spans 622-633 (KSGKSGPTRHRA). A coiled-coil region spans residues 682–727 (WYERKIEEARSQANQKAQQDKATLKEHIKSLEEELAKLRTRVQKEN).

In terms of assembly, interacts with AXN1, AXN2 and CSNK1E/CKI-epsilon.

In terms of biological role, recruits CKI-epsilon to the beta-catenin degradation complex that consists of AXN1 or AXN2 and GSK3-beta and allows efficient phosphorylation of beta-catenin, thereby inhibiting beta-catenin/Tcf signals. In Homo sapiens (Human), this protein is Ankyrin repeat domain-containing protein 6 (ANKRD6).